Reading from the N-terminus, the 190-residue chain is Putative manganese efflux pump MntP (190 aa).

The next 6 membrane-spanning stretches (helical) occupy residues 3-23 (MSATLILAFGMSMDAFAASIG), 41-61 (LIFGVIEAITPLIGWALGFFA), 62-82 (SQYILEWDHWVAFTLLLILGG), 105-127 (LALLVCTAIATSLDAMAIGVGLA), 143-163 (ATMIMVTLGMMIGRYIGPILG), and 168-188 (VMGGLVLIGIGCNILYEHLGY).

This sequence belongs to the MntP (TC 9.B.29) family.

It localises to the cell inner membrane. Its function is as follows. Probably functions as a manganese efflux pump. The chain is Putative manganese efflux pump MntP from Pectobacterium carotovorum subsp. carotovorum (strain PC1).